We begin with the raw amino-acid sequence, 311 residues long: 3-oxo-4,17-pregnadiene-20-carboxyl-CoA hydratase alpha subunit (311 aa).

The DUF35 stretch occupies residues Trp-198 to Thr-295.

It belongs to the thioester dehydratase family. In terms of assembly, heterodimer composed of ChsH1 and ChsH2. Two heterodimers combine to form a heterotetramer. The complex interacts with Ltp2 via the DUF35 C-terminal region of ChsH2. The ChsH1-ChsH2-Ltp2 protein complex is composed of two protomers that form a heterohexameric structure through the Ltp2 dimerization interface.

It catalyses the reaction 3-oxochola-4,17-dien-22-oyl-CoA + H2O = 17-hydroxy-3-oxochol-4-en-22-oyl-CoA. The catalysed reaction is (2E)-octenoyl-CoA + H2O = 3-hydroxyoctanoyl-CoA. It carries out the reaction (2E)-decenoyl-CoA + H2O = 3-hydroxydecanoyl-CoA. The protein operates within steroid metabolism; cholesterol degradation. Its activity is regulated as follows. In the absence of the Ltp2 aldolase, ChsH1/ChsH2 can hydrate only about 30% of the 3-OPDC-CoA substrate. Complete turnover requires the presence of Ltp2. Functionally, involved in cholesterol side chain degradation. Catalyzes the hydration of 3-oxo-4,17-pregnadiene-20-carboxyl-CoA (3-OPDC-CoA) to form 17-hydroxy-3-oxo-4-pregnene-20-carboxyl-CoA (17-HOPC-CoA), in the modified beta-oxidation pathway for cholesterol side chain degradation. Can also use octenoyl-CoA and decenoyl-CoA, with lower efficiency. This Mycobacterium tuberculosis (strain ATCC 25618 / H37Rv) protein is 3-oxo-4,17-pregnadiene-20-carboxyl-CoA hydratase alpha subunit.